Reading from the N-terminus, the 530-residue chain is Transcriptional regulator VasH (530 aa).

The Sigma-54 factor interaction domain occupies 193 to 422 (LIGESAAMQK…LKHLIEFGCA (230 aa)). ATP is bound by residues 221–228 (GETGTGKE) and 284–293 (ANGGTLFLDE).

Functionally, transcriptional regulator of the type VI secretion system. This is Transcriptional regulator VasH from Vibrio cholerae serotype O1 (strain ATCC 39315 / El Tor Inaba N16961).